An 83-amino-acid polypeptide reads, in one-letter code: Exodeoxyribonuclease 7 small subunit (83 aa).

The protein belongs to the XseB family. Heterooligomer composed of large and small subunits.

It is found in the cytoplasm. The catalysed reaction is Exonucleolytic cleavage in either 5'- to 3'- or 3'- to 5'-direction to yield nucleoside 5'-phosphates.. Functionally, bidirectionally degrades single-stranded DNA into large acid-insoluble oligonucleotides, which are then degraded further into small acid-soluble oligonucleotides. This chain is Exodeoxyribonuclease 7 small subunit, found in Allorhizobium ampelinum (strain ATCC BAA-846 / DSM 112012 / S4) (Agrobacterium vitis (strain S4)).